Consider the following 464-residue polypeptide: Purple acid phosphatase (464 aa).

The signal sequence occupies residues Met-1–Arg-30. Asn-108 and Asn-136 each carry an N-linked (GlcNAc...) asparagine glycan. A Fe cation-binding site is contributed by Asp-162. Residue Asn-170 is glycosylated (N-linked (GlcNAc...) asparagine). Fe cation is bound by residues Asp-191 and Tyr-194. Residue Asp-191 participates in Zn(2+) binding. Position 228 (Asn-228) interacts with Zn(2+). Substrate is bound at residue Asn-228. A glycan (N-linked (GlcNAc...) asparagine) is linked at Asn-301. His-313 lines the Zn(2+) pocket. His-323 acts as the Proton donor in catalysis. His-350 lines the Zn(2+) pocket. His-350 to His-352 is a substrate binding site. Residue His-352 coordinates Fe cation. Asn-398 and Asn-423 each carry an N-linked (GlcNAc...) asparagine glycan.

The protein belongs to the metallophosphoesterase superfamily. Purple acid phosphatase family. Homodimer; disulfide-linked. The cofactor is Fe cation. It depends on Zn(2+) as a cofactor. Mn(2+) serves as cofactor. Cu(2+) is required as a cofactor. Requires Mg(2+) as cofactor.

It is found in the secreted. It carries out the reaction a phosphate monoester + H2O = an alcohol + phosphate. The chain is Purple acid phosphatase from Glycine max (Soybean).